Here is a 163-residue protein sequence, read N- to C-terminus: Thiol peroxidase (163 aa).

Residues 16–162 (LQVGDTAHDF…YDAAIAAVKN (147 aa)) enclose the Thioredoxin domain. The Cysteine sulfenic acid (-SOH) intermediate role is filled by Cys58. An intrachain disulfide couples Cys58 to Cys92.

Belongs to the peroxiredoxin family. Tpx subfamily. In terms of assembly, homodimer.

The catalysed reaction is a hydroperoxide + [thioredoxin]-dithiol = an alcohol + [thioredoxin]-disulfide + H2O. Its function is as follows. Thiol-specific peroxidase that catalyzes the reduction of hydrogen peroxide and organic hydroperoxides to water and alcohols, respectively. Plays a role in cell protection against oxidative stress by detoxifying peroxides. This Streptococcus gordonii protein is Thiol peroxidase.